The chain runs to 271 residues: Solute carrier family 66 member 2 (271 aa).

3 helical membrane-spanning segments follow: residues 7–27, 49–69, and 72–92; these read GWLL…AMVF, FSTH…LFWF, and HFES…LLML. Residues 14 to 80 enclose the PQ-loop 1 domain; it reads HQLVSWVAAG…RHFESPLLWQ (67 aa). A Phosphoserine modification is found at Ser-110. 3 helical membrane passes run 145-165, 168-188, and 232-252; these read DYVQ…YLSI, ALFV…LGVP, and VCGL…YAFA. The region spanning 178–233 is the PQ-loop 2 domain; sequence AVLTEAMLGVPQLYRNYCHRSTEGMSLKMVLMWTSGDTFKTAYFLLNGAPLQFSVC.

It localises to the membrane. In Mus musculus (Mouse), this protein is Solute carrier family 66 member 2 (Slc66a2).